A 382-amino-acid chain; its full sequence is 2-heptyl-3-hydroxy-4(1H)-quinolone synthase (382 aa).

It belongs to the 3-hydroxybenzoate 6-hydroxylase family.

It catalyses the reaction 2-heptyl-4(1H)-quinolone + NADH + O2 + H(+) = 2-heptyl-3-hydroxy-4(1H)-quinolone + NAD(+) + H2O. In terms of biological role, involved in the terminal step of the biosynthesis of quinolone which in addition to serve as a potent signal for quorum sensing, chelates iron and promotes the formation of membrane vesicles (MVs). Catalyzes the hydroxylation of 2-heptyl-4-quinolone (C7-HHQ) to yield 2-heptyl-3-hydroxy-4-quinolone (PQS). PqsH is also able to hydroxylate HHQ analogs having alkyl side-chain lengths of 3 (C3-HHQ), 5 (C5-HHQ) and 9 (C9-HHQ) carbons, however catalytic efficiencies are significantly reduced for substrates with alkyl side-chain lengths below 7 carbons. The protein is 2-heptyl-3-hydroxy-4(1H)-quinolone synthase (pqsH) of Pseudomonas aeruginosa (strain UCBPP-PA14).